The chain runs to 515 residues: GMP synthase [glutamine-hydrolyzing] (515 aa).

Residues 10–200 enclose the Glutamine amidotransferase type-1 domain; it reads TIIVLDFGSQ…VFGVCGCSEG (191 aa). Residue C87 is the Nucleophile of the active site. Residues H174 and E176 contribute to the active site. One can recognise a GMPS ATP-PPase domain in the interval 201–390; the sequence is WNMENFIEVE…LGIPDEIVWR (190 aa). 228–234 is an ATP binding site; it reads SGGVDSS.

Homodimer.

The catalysed reaction is XMP + L-glutamine + ATP + H2O = GMP + L-glutamate + AMP + diphosphate + 2 H(+). Its pathway is purine metabolism; GMP biosynthesis; GMP from XMP (L-Gln route): step 1/1. Functionally, catalyzes the synthesis of GMP from XMP. This Bacillus thuringiensis subsp. konkukian (strain 97-27) protein is GMP synthase [glutamine-hydrolyzing].